Consider the following 499-residue polypeptide: MNAPESLPVEFPVFDNSFAALPEAFYTRLEPHPLPEPYVVGVSTEVADLLGLPAELMNSPQFAEIFAGNRLLPGSEPLAAVYSGHQFGVWAGQLGDGRAHLLGGLRNDQGHWEIQLKGAGRTPYSRGADGRAVLRSSIREFLCSEAMAGLGVPTTRALCVIGADQPVRREEIETAALVARVAPGFVRFGSFEHWASRDRSRELQQLADYVIDTFRPACRDAENPYDALLRDISRRTGELIAHWMAVGFMHGVMNTDNMSILGLTLDYGPFGFMEAFDAGHICNHSDHQGRYTYRNQPHVAQWNLYCLADAFLPLLKHPDISRVAVDETYGDAFAQTFERLMCAKLGLRHALPDDENFIGETFGFLQQHRPDFTLFFRRLSRLSGGLDGEAMAKADAPLRDLFVDRAACDAWLANWRARLAQTPWDDGERQASMLAANPKYVLRNWLAEAAIRKAKLKDYSDVQRLLTCLRRPYDEQPEFDDLAALPPDWASGLEVSCSS.

ATP contacts are provided by Gly95, Gly97, Arg98, Lys117, Asp129, Gly130, Arg180, and Arg187. Residue Asp256 is the Proton acceptor of the active site. Residues Asn257 and Asp266 each contribute to the Mg(2+) site. Residue Asp266 coordinates ATP.

It belongs to the SELO family. Mg(2+) serves as cofactor. Requires Mn(2+) as cofactor.

The catalysed reaction is L-seryl-[protein] + ATP = 3-O-(5'-adenylyl)-L-seryl-[protein] + diphosphate. It carries out the reaction L-threonyl-[protein] + ATP = 3-O-(5'-adenylyl)-L-threonyl-[protein] + diphosphate. It catalyses the reaction L-tyrosyl-[protein] + ATP = O-(5'-adenylyl)-L-tyrosyl-[protein] + diphosphate. The enzyme catalyses L-histidyl-[protein] + UTP = N(tele)-(5'-uridylyl)-L-histidyl-[protein] + diphosphate. The catalysed reaction is L-seryl-[protein] + UTP = O-(5'-uridylyl)-L-seryl-[protein] + diphosphate. It carries out the reaction L-tyrosyl-[protein] + UTP = O-(5'-uridylyl)-L-tyrosyl-[protein] + diphosphate. Nucleotidyltransferase involved in the post-translational modification of proteins. It can catalyze the addition of adenosine monophosphate (AMP) or uridine monophosphate (UMP) to a protein, resulting in modifications known as AMPylation and UMPylation. The sequence is that of Protein nucleotidyltransferase YdiU from Dechloromonas aromatica (strain RCB).